Here is a 274-residue protein sequence, read N- to C-terminus: Energy-coupling factor transporter ATP-binding protein EcfA (274 aa).

The ABC transporter domain occupies 2–235 (IRLENVSYNY…LSLRYLGLTP (234 aa)). Position 35–42 (35–42 (GKNGSGKS)) interacts with ATP.

It belongs to the ABC transporter superfamily. Energy-coupling factor EcfA family. Forms a stable energy-coupling factor (ECF) transporter complex composed of 2 membrane-embedded substrate-binding proteins (S component), 2 ATP-binding proteins (A component) and 2 transmembrane proteins (T component).

Its subcellular location is the cell membrane. In terms of biological role, ATP-binding (A) component of a common energy-coupling factor (ECF) ABC-transporter complex. Unlike classic ABC transporters this ECF transporter provides the energy necessary to transport a number of different substrates. This Methanosarcina acetivorans (strain ATCC 35395 / DSM 2834 / JCM 12185 / C2A) protein is Energy-coupling factor transporter ATP-binding protein EcfA.